Here is a 208-residue protein sequence, read N- to C-terminus: Type 3 secretion system stator protein (208 aa).

It belongs to the SctL stator family. The core secretion machinery of the T3SS is composed of approximately 20 different proteins, including cytoplasmic components, a base, an export apparatus and a needle. This subunit is part of the cytosolic complex.

The protein localises to the cytoplasm. Component of the type III secretion system (T3SS), also called injectisome, which is used to inject bacterial effector proteins into eukaryotic host cells. Acts as a regulator of the HrcN/SctN ATPase activity. In Sinorhizobium fredii (strain NBRC 101917 / NGR234), this protein is Type 3 secretion system stator protein.